We begin with the raw amino-acid sequence, 92 residues long: MVRSVWKGPFVEGSLLKKADAARASGRHDVIKIWSRRSTILPQFVGLVFGVYNGQKHVPVSINEEMVGHKFGEFSPTRTFHGHSGDKKAKKA.

Belongs to the universal ribosomal protein uS19 family.

Its function is as follows. Protein S19 forms a complex with S13 that binds strongly to the 16S ribosomal RNA. This Rhodopseudomonas palustris (strain BisA53) protein is Small ribosomal subunit protein uS19.